A 663-amino-acid polypeptide reads, in one-letter code: 4-hydroxy-3-methylbut-2-en-1-yl diphosphate synthase (flavodoxin) (663 aa).

[4Fe-4S] cluster is bound by residues Cys568, Cys571, Cys602, and Glu609.

This sequence belongs to the IspG family. Requires [4Fe-4S] cluster as cofactor.

The catalysed reaction is (2E)-4-hydroxy-3-methylbut-2-enyl diphosphate + oxidized [flavodoxin] + H2O + 2 H(+) = 2-C-methyl-D-erythritol 2,4-cyclic diphosphate + reduced [flavodoxin]. It functions in the pathway isoprenoid biosynthesis; isopentenyl diphosphate biosynthesis via DXP pathway; isopentenyl diphosphate from 1-deoxy-D-xylulose 5-phosphate: step 5/6. In terms of biological role, converts 2C-methyl-D-erythritol 2,4-cyclodiphosphate (ME-2,4cPP) into 1-hydroxy-2-methyl-2-(E)-butenyl 4-diphosphate. This chain is 4-hydroxy-3-methylbut-2-en-1-yl diphosphate synthase (flavodoxin), found in Leptospira interrogans serogroup Icterohaemorrhagiae serovar copenhageni (strain Fiocruz L1-130).